The following is a 499-amino-acid chain: Low-affinity inorganic phosphate transporter PitA (499 aa).

Over 1-4 (MLHL) the chain is Periplasmic. Residues 5 to 25 (FAGLDLHTGLLLLLALAFVLF) form a helical membrane-spanning segment. The Cytoplasmic portion of the chain corresponds to 26 to 51 (YEAINGFHDTANAVATVIYTRAMRSQ). A helical transmembrane segment spans residues 52 to 72 (LAVVMAAVFNFLGVLLGGLSV). Topologically, residues 73-93 (AYAIVHMLPTDLLLNMGSSHG) are periplasmic. Residues 94–114 (LAMVFSMLLAAIIWNLGTWYF) form a helical membrane-spanning segment. Topologically, residues 115–123 (GLPASSSHT) are cytoplasmic. A helical membrane pass occupies residues 124–144 (LIGAIIGIGLTNALMTGTSVV). Over 145–154 (DALNIPKVLS) the chain is Periplasmic. A helical transmembrane segment spans residues 155 to 175 (IFGSLIVSPIVGLVFAGGLIF). The Cytoplasmic segment spans residues 176–206 (LLRRYWSGTKKRARIHLTPAEREKKDGKKKP). A helical transmembrane segment spans residues 207–227 (PFWTRIALILSAIGVAFSHGA). Over 228-232 (NDGQK) the chain is Periplasmic. Residues 233–253 (GIGLVMLVLIGVAPAGFVVNM) traverse the membrane as a helical segment. At 254 to 381 (NATGYEITRT…KSDMLSTIEY (128 aa)) the chain is on the cytoplasmic side. The helical transmembrane segment at 382 to 402 (APVWIIMAVALALGIGTMIGW) threads the bilayer. The Periplasmic segment spans residues 403–429 (RRVATTIGEKIGKKGMTYAQGMSAQMT). The helical transmembrane segment at 430 to 450 (AAVSIGLASYTGMPVSTTHVL) threads the bilayer. Residues 451–472 (SSSVAGTMVVDGGGLQRKTVTS) lie on the Cytoplasmic side of the membrane. Residues 473–493 (ILMAWVFTLPAAVLLSGGLYW) form a helical membrane-spanning segment. The Periplasmic segment spans residues 494 to 499 (LSLQFL).

It belongs to the inorganic phosphate transporter (PiT) (TC 2.A.20) family. Pit subfamily.

It localises to the cell inner membrane. The enzyme catalyses phosphate(in) + H(+)(in) = phosphate(out) + H(+)(out). Its function is as follows. Low-affinity inorganic phosphate transporter. The protein is Low-affinity inorganic phosphate transporter PitA (pitA) of Escherichia coli O157:H7.